The primary structure comprises 302 residues: Recombination-associated protein RdgC (302 aa).

Belongs to the RdgC family.

It localises to the cytoplasm. Its subcellular location is the nucleoid. In terms of biological role, may be involved in recombination. The protein is Recombination-associated protein RdgC of Psychromonas ingrahamii (strain DSM 17664 / CCUG 51855 / 37).